We begin with the raw amino-acid sequence, 315 residues long: Homoserine kinase (315 aa).

97–107 (PPARGLGSSAT) is an ATP binding site.

Belongs to the GHMP kinase family. Homoserine kinase subfamily.

It is found in the cytoplasm. The catalysed reaction is L-homoserine + ATP = O-phospho-L-homoserine + ADP + H(+). The protein operates within amino-acid biosynthesis; L-threonine biosynthesis; L-threonine from L-aspartate: step 4/5. Functionally, catalyzes the ATP-dependent phosphorylation of L-homoserine to L-homoserine phosphate. The chain is Homoserine kinase from Prochlorococcus marinus (strain NATL1A).